The sequence spans 768 residues: DNA ligase (768 aa).

Residues 61–65 (DAEFD), 110–111 (SL), and Glu146 contribute to the NAD(+) site. Residue Lys148 is the N6-AMP-lysine intermediate of the active site. Positions 169, 206, 322, and 346 each coordinate NAD(+). Zn(2+) is bound by residues Cys443, Cys446, Cys462, and Cys468. Positions 661-750 (SVPRTLEGLT…PAQTGTEAEA (90 aa)) constitute a BRCT domain. The segment at 739–768 (NGPAQTGTEAEAATDEATVVDETAAEAATE) is disordered. Positions 746–768 (TEAEAATDEATVVDETAAEAATE) are enriched in low complexity.

This sequence belongs to the NAD-dependent DNA ligase family. LigA subfamily. Mg(2+) serves as cofactor. It depends on Mn(2+) as a cofactor.

It catalyses the reaction NAD(+) + (deoxyribonucleotide)n-3'-hydroxyl + 5'-phospho-(deoxyribonucleotide)m = (deoxyribonucleotide)n+m + AMP + beta-nicotinamide D-nucleotide.. In terms of biological role, DNA ligase that catalyzes the formation of phosphodiester linkages between 5'-phosphoryl and 3'-hydroxyl groups in double-stranded DNA using NAD as a coenzyme and as the energy source for the reaction. It is essential for DNA replication and repair of damaged DNA. In Paenarthrobacter aurescens (strain TC1), this protein is DNA ligase.